Reading from the N-terminus, the 397-residue chain is S-adenosylmethionine:tRNA ribosyltransferase-isomerase (397 aa).

Belongs to the QueA family. As to quaternary structure, monomer.

It is found in the cytoplasm. It catalyses the reaction 7-aminomethyl-7-carbaguanosine(34) in tRNA + S-adenosyl-L-methionine = epoxyqueuosine(34) in tRNA + adenine + L-methionine + 2 H(+). It functions in the pathway tRNA modification; tRNA-queuosine biosynthesis. In terms of biological role, transfers and isomerizes the ribose moiety from AdoMet to the 7-aminomethyl group of 7-deazaguanine (preQ1-tRNA) to give epoxyqueuosine (oQ-tRNA). This is S-adenosylmethionine:tRNA ribosyltransferase-isomerase from Nostoc sp. (strain PCC 7120 / SAG 25.82 / UTEX 2576).